The chain runs to 104 residues: MIRKAFVMSVNAGCEAEYERRHRPIWAELAQVLKAHGVHNYSIFLHPQTRQLFGYVEIEDEARWAAIARTPECQRWWKHMGDVMPSNPDFSPVSADLREVFHLD.

Tyr-18 lines the substrate pocket. His-22 functions as the Proton donor in the catalytic mechanism. Substrate is bound by residues Tyr-41 and 76–77; that span reads WW.

The protein belongs to the rhamnose mutarotase family. Homodimer.

It is found in the cytoplasm. It catalyses the reaction alpha-L-rhamnose = beta-L-rhamnose. The protein operates within carbohydrate metabolism; L-rhamnose metabolism. Functionally, involved in the anomeric conversion of L-rhamnose. The sequence is that of L-rhamnose mutarotase from Opitutus terrae (strain DSM 11246 / JCM 15787 / PB90-1).